We begin with the raw amino-acid sequence, 376 residues long: 5-amino-6-(D-ribitylamino)uracil--L-tyrosine 4-hydroxyphenyl transferase 1 (376 aa).

The Radical SAM core domain maps to 50 to 275 (VTYVVNRNIN…PGLEDLKVYA (226 aa)). The [4Fe-4S] cluster site is built by cysteine 64, cysteine 68, and cysteine 71.

This sequence belongs to the radical SAM superfamily. CofH family. As to quaternary structure, consists of two subunits, CofG and CofH. Requires [4Fe-4S] cluster as cofactor.

The catalysed reaction is 5-amino-6-(D-ribitylamino)uracil + L-tyrosine + S-adenosyl-L-methionine = 5-amino-5-(4-hydroxybenzyl)-6-(D-ribitylimino)-5,6-dihydrouracil + 2-iminoacetate + 5'-deoxyadenosine + L-methionine + H(+). It functions in the pathway cofactor biosynthesis; coenzyme F0 biosynthesis. Its function is as follows. Catalyzes the radical-mediated synthesis of 5-amino-5-(4-hydroxybenzyl)-6-(D-ribitylimino)-5,6-dihydrouracil from 5-amino-6-(D-ribitylamino)uracil and L-tyrosine. The polypeptide is 5-amino-6-(D-ribitylamino)uracil--L-tyrosine 4-hydroxyphenyl transferase 1 (Methanosarcina mazei (strain ATCC BAA-159 / DSM 3647 / Goe1 / Go1 / JCM 11833 / OCM 88) (Methanosarcina frisia)).